A 267-amino-acid polypeptide reads, in one-letter code: RWD domain-containing protein 3 (267 aa).

The RWD domain maps to Glu7–Ile114. Interaction with UBE2I/UBC9 stretches follow at residues Ala13–Ile15 and Val100–Glu102.

In terms of assembly, isoform 1 and isoform 2 interact with UBE2I/UBC9. Isoform 1 shows a greater interaction with NFKBIA and HIF1A as compared to isoform 2. Isoform 2 interacts with NCOA2 and NR3C1. As to expression, isoform 1 and isoform 2 are expressed in glioma tumors (at protein level). Expressed in a wide number of tissues with highest expression in cerebellum, pituitary, heart, kidney, liver, stomach, pancreas, prostate and spleen. Low levels in thalamus, spinal cord, esophagus, thymus, lung and peripheral blood leukocytes. A higher level expression seen in pituitary tumors as compared to the pituitary gland.

The protein resides in the nucleus. Its subcellular location is the cytoplasm. Its function is as follows. Enhancer of SUMO conjugation. Via its interaction with UBE2I/UBC9, increases SUMO conjugation to proteins by promoting the binding of E1 and E2 enzymes, thioester linkage between SUMO and UBE2I/UBC9 and transfer of SUMO to specific target proteins which include HIF1A, PIAS, NFKBIA, NR3C1 and TOP1. Isoform 1 and isoform 2 positively regulate the NF-kappa-B signaling pathway by enhancing the sumoylation of NF-kappa-B inhibitor alpha (NFKBIA), promoting its stabilization which consequently leads to an increased inhibition of NF-kappa-B transcriptional activity. Isoform 1 and isoform 2 negatively regulate the hypoxia-inducible factor-1 alpha (HIF1A) signaling pathway by increasing the sumoylation of HIF1A, promoting its stabilization, transcriptional activity and the expression of its target gene VEGFA during hypoxia. Isoform 2 promotes the sumoylation and transcriptional activity of the glucocorticoid receptor NR3C1 and enhances the interaction of SUMO1 and NR3C1 with UBE2I/UBC9. Has no effect on ubiquitination. The polypeptide is RWD domain-containing protein 3 (RWDD3) (Homo sapiens (Human)).